We begin with the raw amino-acid sequence, 433 residues long: Serine hydroxymethyltransferase (433 aa).

121–123 (AHV) is a binding site for (6S)-5,6,7,8-tetrahydrofolate. Lysine 227 is subject to N6-(pyridoxal phosphate)lysine. Glutamate 243 is a binding site for (6S)-5,6,7,8-tetrahydrofolate.

The protein belongs to the SHMT family. In terms of assembly, homodimer. Pyridoxal 5'-phosphate serves as cofactor.

It localises to the cytoplasm. The protein operates within amino-acid biosynthesis; glycine biosynthesis; glycine from L-serine: step 1/1. In terms of biological role, catalyzes the reversible interconversion of serine and glycine with a modified folate serving as the one-carbon carrier. Also exhibits a pteridine-independent aldolase activity toward beta-hydroxyamino acids, producing glycine and aldehydes, via a retro-aldol mechanism. The protein is Serine hydroxymethyltransferase of Saccharolobus islandicus (strain L.S.2.15 / Lassen #1) (Sulfolobus islandicus).